Consider the following 116-residue polypeptide: NADH-ubiquinone oxidoreductase chain 3 (116 aa).

3 consecutive transmembrane segments (helical) span residues 3–23 (LIMTILTITVALSLILATVSF), 56–76 (FFLVAILFLLFDLEIALLLPL), and 87–107 (GTFFWATTVLILLTLGLIYEW).

It belongs to the complex I subunit 3 family.

Its subcellular location is the mitochondrion membrane. The catalysed reaction is a ubiquinone + NADH + 5 H(+)(in) = a ubiquinol + NAD(+) + 4 H(+)(out). Its function is as follows. Core subunit of the mitochondrial membrane respiratory chain NADH dehydrogenase (Complex I) that is believed to belong to the minimal assembly required for catalysis. Complex I functions in the transfer of electrons from NADH to the respiratory chain. The immediate electron acceptor for the enzyme is believed to be ubiquinone. The sequence is that of NADH-ubiquinone oxidoreductase chain 3 (MT-ND3) from Cyprinus carpio (Common carp).